Consider the following 131-residue polypeptide: MKIALIAHDKKKEDMVSFAYAYKPIFEQHELFATGTTGLRIMEATGLVVTRYQSGPLGGDQEIGAMIAKNDLDMVIFFRDPLTAQPHEPDVNALLRLCDVYAIPLATNMASAEMLMHALERGDLDYRKLRK.

The region spanning Met1–Lys131 is the MGS-like domain. Substrate contacts are provided by residues His8, Lys12, Thr34–Thr37, and Ser54–Gly55. Catalysis depends on Asp60, which acts as the Proton donor/acceptor. His87 is a substrate binding site.

This sequence belongs to the methylglyoxal synthase family.

It carries out the reaction dihydroxyacetone phosphate = methylglyoxal + phosphate. Its function is as follows. Catalyzes the formation of methylglyoxal from dihydroxyacetone phosphate. The protein is Methylglyoxal synthase of Bacillus anthracis (strain A0248).